The primary structure comprises 310 residues: AA9 family lytic polysaccharide monooxygenase A (310 aa).

A signal peptide spans 1-21; the sequence is MPSTKVAALSAVLALASTVAG. Cu(2+)-binding residues include histidine 22 and histidine 107. 2 disulfides stabilise this stretch: cysteine 77/cysteine 199 and cysteine 118/cysteine 122. N-linked (GlcNAc...) asparagine glycosylation is found at asparagine 121 and asparagine 159. Histidine 185 contributes to the O2 binding site. Residue tyrosine 196 participates in Cu(2+) binding.

This sequence belongs to the polysaccharide monooxygenase AA9 family. Requires Cu(2+) as cofactor.

It localises to the secreted. It catalyses the reaction [(1-&gt;4)-beta-D-glucosyl]n+m + reduced acceptor + O2 = 4-dehydro-beta-D-glucosyl-[(1-&gt;4)-beta-D-glucosyl]n-1 + [(1-&gt;4)-beta-D-glucosyl]m + acceptor + H2O.. Functionally, lytic polysaccharide monooxygenase (LPMO) that depolymerizes crystalline and amorphous polysaccharides via the oxidation of scissile alpha- or beta-(1-4)-glycosidic bonds, yielding C1, C4 as well as C6 oxidation products. Catalysis by LPMOs requires the reduction of the active-site copper from Cu(II) to Cu(I) by a reducing agent and H(2)O(2) or O(2) as a cosubstrate. Active on cellulose, but not on xylan, starch, or chitin. This is AA9 family lytic polysaccharide monooxygenase A from Talaromyces pinophilus (Penicillium pinophilum).